A 631-amino-acid polypeptide reads, in one-letter code: Fusexin 1 (631 aa).

An N-terminal signal peptide occupies residues 1–19; sequence MRRAALILAFVLFIGLSSA. A domain I N-terminus region spans residues 20-90; the sequence is TVTSADSITY…THQDSKLKYS (71 aa). Over 20 to 537 the chain is Extracellular; that stretch reads TVTSADSITY…NLFGGSGSGD (518 aa). A domain II N-terminus region spans residues 91–170; that stretch reads TSTSDELRDI…KLATPAYIDN (80 aa). Ca(2+) contacts are provided by aspartate 112, serine 146, tyrosine 149, and aspartate 150. Residues cysteine 125 and cysteine 155 are joined by a disulfide bond. The fusion loop, required for fusogenic activity, not required for membrane surface localization stretch occupies residues 143–148; sequence SVTSPV. Residues 171 to 224 are domain I central section; sequence PDEIFTAKAELQAGDKTIQSATLSNGDAGDGTVTDLGDSKISWNGNLDLGASEP. Residues 225-316 are domain II C-terminus; the sequence is ENSRVIALYS…KDSSLDTGSF (92 aa). Residues 317–348 form a domain I C-terminus region; it reads VYDTPELLSYPSFTVYVDAGENGYIEVTKPTG. Residues 349–455 are domain III; it reads DPDIISTSST…SVSVTGIQQS (107 aa). 3 disulfides stabilise this stretch: cysteine 389–cysteine 432, cysteine 457–cysteine 477, and cysteine 490–cysteine 506. The segment at 443–467 is disordered; the sequence is DSTSVSVTGIQQSECNPGDQRREKN. The domain IV, required for fusogenic activity stretch occupies residues 456–509; the sequence is ECNPGDQRREKNENDRWEIYTCQDNGLTYEYDVTCAEDEKAVAQGDNQFSCEKQ. The tract at residues 510 to 537 is stem; sequence DDDSGGGDNTGSDSGLFSNLFGGSGSGD. Residues 538–558 form a helical membrane-spanning segment; that stretch reads LLTQVHTALSILAGLVAGFFG. Over 559 to 590 the chain is Cytoplasmic; it reads YRGARWIHGETDIKGGFKLESRNVSRVKRGSP. Residues 591-611 form a helical membrane-spanning segment; that stretch reads VAGIVGAVLGFVVGYGVASVF. A topological domain (extracellular) is located at residue histidine 612. The chain crosses the membrane as a helical span at residues 613-630; it reads PVVQIIVVLGIAVGLYYF. Position 631 (arginine 631) is a topological domain, cytoplasmic.

The protein belongs to the HAP2/GCS1 family. Fusexin 1 subfamily. As to quaternary structure, monomer in solution, crystallizes as a trimer in high salt (2.5 M NaCl, 0.2 M CaCl(2)). The trimer is stabilized by interdomain contacts and numerous Ca(2+) and Na(+) ions.

Its subcellular location is the cell surface. The protein resides in the cell membrane. Its function is as follows. Exhibits fusogenic activity. Mediates cell-cell fusion in mammalian cells when present in both cells (bilateral fusion). In Uncultured archaeon, this protein is Fusexin 1.